The chain runs to 262 residues: Acyl-[acyl-carrier-protein]--UDP-N-acetylglucosamine O-acyltransferase (262 aa).

It belongs to the transferase hexapeptide repeat family. LpxA subfamily. Homotrimer.

The protein resides in the cytoplasm. The enzyme catalyses a (3R)-hydroxyacyl-[ACP] + UDP-N-acetyl-alpha-D-glucosamine = a UDP-3-O-[(3R)-3-hydroxyacyl]-N-acetyl-alpha-D-glucosamine + holo-[ACP]. It functions in the pathway glycolipid biosynthesis; lipid IV(A) biosynthesis; lipid IV(A) from (3R)-3-hydroxytetradecanoyl-[acyl-carrier-protein] and UDP-N-acetyl-alpha-D-glucosamine: step 1/6. In terms of biological role, involved in the biosynthesis of lipid A, a phosphorylated glycolipid that anchors the lipopolysaccharide to the outer membrane of the cell. The sequence is that of Acyl-[acyl-carrier-protein]--UDP-N-acetylglucosamine O-acyltransferase from Burkholderia ambifaria (strain ATCC BAA-244 / DSM 16087 / CCUG 44356 / LMG 19182 / AMMD) (Burkholderia cepacia (strain AMMD)).